Reading from the N-terminus, the 684-residue chain is MLPPPKSAAVQIVRPPSPSSEKAKEKEKKHSPEKRETAQRICRNVMIYGYCKYQDQGCIYYHPPAGADPSTPQNSSPVAHAPTPSAPTPLAGTPAREKPTLSIEHLAAPVFVPKGLDSSPRASTPSVPTPSAPTPPVWPSLPSTGLLPRQDVQVSAQPSHAQLSATASPMAYDDPSHIALSAAHAHAQAQALTHGILDPHAHAPPVDQSMYLPPRQPLDYNLYAAPLPSIGGNPLYPTHPHAFFVSDDLRRAIQAKQEAVYAGANGASAPGLPQELGVYHSLIPLPLPAPTAQCPPTQSQPSKVYGLPSPVYRATSEVDGNTYCLRRVEGFKLVNQLAFASMDTWRRMRHPNIVGLKEAFTTKTFGDNSLIMVYDYHPLSTTLYDEYLSPNPPEPSPASALANQPPKRRSSPPERILWSYVTQIANALKAIHSSGLAVRNLDASKILLTGKNRIRLNGCGVWDVLAFDNKTPVQAFQQEDLLSFGKLIISLTCDFFQPTLPFSLPLEHISRHYSSDLSNLILYLISKPAQGQIKSIDEVVKMMGPRILNELDAVQSYADVLENELGAEVENGRIVRLLTKLGFINERAEFELDPRWSDTGDRYILKLFRDYVFHSVGVDGKPILDLSHVLVCLNKLDAGLDERVMLVSRDDQSCLVVSYREIKHCIEAAFNELKNAGNNHRVHR.

Disordered stretches follow at residues Met-1–Ala-38, Asp-68–Glu-97, and Val-112–Leu-146. Residues Glu-21 to Ala-38 are compositionally biased toward basic and acidic residues. A C3H1-type zinc finger spans residues Glu-36–Ala-65. A compositionally biased stretch (pro residues) spans Val-127 to Pro-139. The segment at Gly-263–Gly-544 is pseudokinase domain. ATP contacts are provided by residues Arg-326 and Asp-375–Thr-382. The segment at Tyr-387–Pro-412 is disordered. Ser-444–Lys-445 serves as a coordination point for ATP. Residues Pro-545–Phe-583 adopt a coiled-coil conformation. Residues Ile-584 to Arg-684 are knob domain.

This sequence belongs to the protein kinase superfamily. PAN3 family. In terms of assembly, homodimer. Forms a heterotrimer with a catalytic subunit PAN2 to form the poly(A)-nuclease (PAN) deadenylation complex. Interacts (via PAM-2 motif) with poly(A)-binding protein PAB1 (via PABC domain), conferring substrate specificity of the enzyme complex.

It is found in the cytoplasm. Regulatory subunit of the poly(A)-nuclease (PAN) deadenylation complex, one of two cytoplasmic mRNA deadenylases involved in mRNA turnover. PAN specifically shortens poly(A) tails of RNA and the activity is stimulated by poly(A)-binding protein PAB1. PAN deadenylation is followed by rapid degradation of the shortened mRNA tails by the CCR4-NOT complex. Deadenylated mRNAs are then degraded by two alternative mechanisms, namely exosome-mediated 3'-5' exonucleolytic degradation, or deadenylation-dependent mRNA decaping and subsequent 5'-3' exonucleolytic degradation by XRN1. May also be involved in post-transcriptional maturation of mRNA poly(A) tails. PAN3 acts as a positive regulator for PAN activity, recruiting the catalytic subunit PAN2 to mRNA via its interaction with RNA and with PAB1. This chain is PAN2-PAN3 deadenylation complex subunit PAN3, found in Cryptococcus neoformans var. neoformans serotype D (strain B-3501A) (Filobasidiella neoformans).